A 114-amino-acid chain; its full sequence is Non-specific lipid-transfer protein 1 (114 aa).

The first 23 residues, 1 to 23 (MEMVSKIACFVLLCMVVVAPHAE), serve as a signal peptide directing secretion. Disulfide bonds link C27-C73, C37-C50, C51-C96, and C71-C110.

It belongs to the plant LTP family.

In terms of biological role, plant non-specific lipid-transfer proteins transfer phospholipids as well as galactolipids across membranes. May play a role in wax or cutin deposition in the cell walls of expanding epidermal cells and certain secretory tissues. This chain is Non-specific lipid-transfer protein 1 (TSW12), found in Solanum lycopersicum (Tomato).